The sequence spans 356 residues: uncharacterized protein (356 aa).

The next 6 membrane-spanning stretches (helical) occupy residues 2-22 (IESI…FHRL), 35-55 (GYVT…PIPF), 76-96 (NMGY…FAFG), 99-119 (LLYG…GPFL), 124-144 (IVAL…LSIF), and 152-172 (EIAF…ITFV). A GGDEF domain is found at 218–353 (ESLALLLIDI…GRNQVMFNPI (136 aa)).

The protein resides in the cell membrane. This is an uncharacterized protein from Staphylococcus haemolyticus (strain JCSC1435).